Here is a 104-residue protein sequence, read N- to C-terminus: MRQFENVTIVKKANVYYEGKVTSRTVLFQDGSKKTLGILMPGQYDFGTDEKEIMEILDGDMLVKLPGEDSWKEIKGAQSFEVPAKSRFQMDVKKISDYCCSYIG.

This sequence belongs to the nucleoside phosphorylase PpnP family.

It carries out the reaction a purine D-ribonucleoside + phosphate = a purine nucleobase + alpha-D-ribose 1-phosphate. The catalysed reaction is adenosine + phosphate = alpha-D-ribose 1-phosphate + adenine. The enzyme catalyses cytidine + phosphate = cytosine + alpha-D-ribose 1-phosphate. It catalyses the reaction guanosine + phosphate = alpha-D-ribose 1-phosphate + guanine. It carries out the reaction inosine + phosphate = alpha-D-ribose 1-phosphate + hypoxanthine. The catalysed reaction is thymidine + phosphate = 2-deoxy-alpha-D-ribose 1-phosphate + thymine. The enzyme catalyses uridine + phosphate = alpha-D-ribose 1-phosphate + uracil. It catalyses the reaction xanthosine + phosphate = alpha-D-ribose 1-phosphate + xanthine. Functionally, catalyzes the phosphorolysis of diverse nucleosides, yielding D-ribose 1-phosphate and the respective free bases. Can use uridine, adenosine, guanosine, cytidine, thymidine, inosine and xanthosine as substrates. Also catalyzes the reverse reactions. In Leptospira borgpetersenii serovar Hardjo-bovis (strain L550), this protein is Pyrimidine/purine nucleoside phosphorylase.